A 225-amino-acid polypeptide reads, in one-letter code: Thymidylate kinase (225 aa).

9 to 16 (GIEGCGKT) is a binding site for ATP.

This sequence belongs to the thymidylate kinase family.

The catalysed reaction is dTMP + ATP = dTDP + ADP. Phosphorylation of dTMP to form dTDP in both de novo and salvage pathways of dTTP synthesis. This Citrifermentans bemidjiense (strain ATCC BAA-1014 / DSM 16622 / JCM 12645 / Bem) (Geobacter bemidjiensis) protein is Thymidylate kinase.